The chain runs to 528 residues: Benzoylformate decarboxylase (528 aa).

The Mg(2+) site is built by Q117 and L118. Residues 377–460 (TSTVTAFWQR…IILKNGTYGA (84 aa)) form a thiamine pyrophosphate binding region. Residues D428, N455, and T457 each contribute to the Ca(2+) site.

Belongs to the TPP enzyme family. As to quaternary structure, homotetramer. The cofactor is Ca(2+). It depends on thiamine diphosphate as a cofactor. Requires Mg(2+) as cofactor.

The enzyme catalyses phenylglyoxylate + H(+) = benzaldehyde + CO2. Its pathway is aromatic compound metabolism; (R)-mandelate degradation; benzoate from (R)-mandelate: step 3/4. The sequence is that of Benzoylformate decarboxylase (mdlC) from Pseudomonas aeruginosa (strain ATCC 15692 / DSM 22644 / CIP 104116 / JCM 14847 / LMG 12228 / 1C / PRS 101 / PAO1).